The following is a 213-amino-acid chain: Glycerol-3-phosphate acyltransferase (213 aa).

A run of 6 helical transmembrane segments spans residues 2–22 (ITIV…GLWI), 52–74 (AGMA…PIIF), 81–100 (PLIF…FAGF), 112–132 (VIFG…FGAL), 143–163 (VTAS…GFIL), and 164–184 (SNYD…IIIR).

It belongs to the PlsY family. In terms of assembly, probably interacts with PlsX.

It localises to the cell membrane. The enzyme catalyses an acyl phosphate + sn-glycerol 3-phosphate = a 1-acyl-sn-glycero-3-phosphate + phosphate. It participates in lipid metabolism; phospholipid metabolism. In terms of biological role, catalyzes the transfer of an acyl group from acyl-phosphate (acyl-PO(4)) to glycerol-3-phosphate (G3P) to form lysophosphatidic acid (LPA). This enzyme utilizes acyl-phosphate as fatty acyl donor, but not acyl-CoA or acyl-ACP. In Streptococcus pneumoniae (strain ATCC 700669 / Spain 23F-1), this protein is Glycerol-3-phosphate acyltransferase.